Reading from the N-terminus, the 1220-residue chain is Protein transport protein Sec31A (1220 aa).

7 WD repeats span residues 4-47 (KEVD…EIFE), 68-111 (RYHK…AGDK), 120-160 (KHTG…TPMT), 166-206 (QPPE…PIIK), 209-254 (DHSN…SPLR), 258-298 (NHAR…VLYE), and 301-342 (TNTQ…DGLR). The tract at residues 161–471 (PGAKTQPPED…IDASQTEFEK (311 aa)) is interaction with SEC13. Residues 397–430 (SFSFGGKLVTFENVRMPSHQGAEQQQQQHHVFIS) form a WD 8; interaction with SEC13 repeat. A phosphoserine mark is found at Ser527 and Ser532. Lys647 is covalently cross-linked (Glycyl lysine isopeptide (Lys-Gly) (interchain with G-Cter in ubiquitin)). Disordered stretches follow at residues 791–908 (GEPV…NAYP) and 924–1096 (QLYA…GNTF). Ser799 bears the Phosphoserine mark. The interaction with PDCD6 stretch occupies residues 800-1113 (PKIPYEKQQL…TKKITKKPIP (314 aa)). Residues 842–848 (GFIMHGN) carry the ALG-2-binding site motif-2 (ABS-2) motif. A compositionally biased stretch (polar residues) spans 849 to 859 (VNPNAAGQLPT). Residues 869 to 882 (PPYPQPQPYQPAQP) are compositionally biased toward pro residues. The segment covering 962 to 972 (PSSSAYALPPG) has biased composition (low complexity). Composition is skewed to polar residues over residues 984-995 (PASQRTGPQNGW) and 1031-1053 (PQSQ…SSFP). Thr1161 carries the post-translational modification Phosphothreonine. Position 1163 is a phosphoserine (Ser1163). Residue Lys1217 forms a Glycyl lysine isopeptide (Lys-Gly) (interchain with G-Cter in ubiquitin) linkage.

Belongs to the WD repeat SEC31 family. COPII is composed of at least 5 proteins: the SEC23/24 complex, the SEC13/31 complex and SAR1. SEC13 and SEC31 make a 2:2 tetramer that forms the edge element of the COPII outer coat. The tetramer self-assembles in multiple copies to form the complete polyhedral cage. Interacts (via WD 8) with SEC13. Interacts with PDCD6; interaction takes place in response to cytosolic calcium increase and leads to bridge together the BCR(KLHL12) complex and SEC31A, leading to monoubiquitination. Interacts with KLHL12. Post-translationally, monoubiquitinated by the BCR(KLHL12) E3 ubiquitin ligase complex, leading to regulate the size of COPII coats. Abundantly and ubiquitously expressed.

It is found in the cytoplasm. The protein localises to the cytoplasmic vesicle. Its subcellular location is the COPII-coated vesicle membrane. It localises to the endoplasmic reticulum membrane. The protein resides in the cytosol. Component of the coat protein complex II (COPII) which promotes the formation of transport vesicles from the endoplasmic reticulum (ER). The coat has two main functions, the physical deformation of the endoplasmic reticulum membrane into vesicles and the selection of cargo molecules. This chain is Protein transport protein Sec31A (SEC31A), found in Homo sapiens (Human).